The chain runs to 194 residues: RFKKIRRLGTLPGLTSKRPRSGSDLKNPLRSVKRSQYRIRLEEKQKLRFHYGLTERQLLRYVHIAGKAKGSTGQVLLQLLEMRLDNILFRLGMASTIPGARQLVTHRHILVNGRIVDIPSYRCKPRDIITTKDKQRSKALIQNYIASSPHEELPNHLTIDSFQYKGLVNQIIDSKWIGLKINELLVVEYYSRQT.

The interval 1 to 29 (RFKKIRRLGTLPGLTSKRPRSGSDLKNPL) is disordered. The S4 RNA-binding domain maps to 82-143 (MRLDNILFRL…KQRSKALIQN (62 aa)).

The protein belongs to the universal ribosomal protein uS4 family. Part of the 30S ribosomal subunit. Contacts protein S5. The interaction surface between S4 and S5 is involved in control of translational fidelity.

The protein localises to the plastid. The protein resides in the chloroplast. In terms of biological role, one of the primary rRNA binding proteins, it binds directly to 16S rRNA where it nucleates assembly of the body of the 30S subunit. Its function is as follows. With S5 and S12 plays an important role in translational accuracy. This Furcraea foetida (Mauritius hemp) protein is Small ribosomal subunit protein uS4c (rps4).